The primary structure comprises 418 residues: Serine hydroxymethyltransferase (418 aa).

Residues Leu-121 and 125 to 127 (GHL) each bind (6S)-5,6,7,8-tetrahydrofolate. Lys-230 is modified (N6-(pyridoxal phosphate)lysine). 355–357 (SPF) is a binding site for (6S)-5,6,7,8-tetrahydrofolate.

This sequence belongs to the SHMT family. In terms of assembly, homodimer. Pyridoxal 5'-phosphate serves as cofactor.

The protein localises to the cytoplasm. The catalysed reaction is (6R)-5,10-methylene-5,6,7,8-tetrahydrofolate + glycine + H2O = (6S)-5,6,7,8-tetrahydrofolate + L-serine. The protein operates within one-carbon metabolism; tetrahydrofolate interconversion. It functions in the pathway amino-acid biosynthesis; glycine biosynthesis; glycine from L-serine: step 1/1. Its function is as follows. Catalyzes the reversible interconversion of serine and glycine with tetrahydrofolate (THF) serving as the one-carbon carrier. This reaction serves as the major source of one-carbon groups required for the biosynthesis of purines, thymidylate, methionine, and other important biomolecules. Also exhibits THF-independent aldolase activity toward beta-hydroxyamino acids, producing glycine and aldehydes, via a retro-aldol mechanism. The sequence is that of Serine hydroxymethyltransferase from Streptococcus pyogenes serotype M1.